A 202-amino-acid polypeptide reads, in one-letter code: ATP-dependent Clp protease proteolytic subunit (202 aa).

Ser-101 acts as the Nucleophile in catalysis. His-126 is an active-site residue.

Belongs to the peptidase S14 family. As to quaternary structure, component of the chloroplastic Clp protease core complex.

The protein localises to the plastid. It localises to the chloroplast stroma. It catalyses the reaction Hydrolysis of proteins to small peptides in the presence of ATP and magnesium. alpha-casein is the usual test substrate. In the absence of ATP, only oligopeptides shorter than five residues are hydrolyzed (such as succinyl-Leu-Tyr-|-NHMec, and Leu-Tyr-Leu-|-Tyr-Trp, in which cleavage of the -Tyr-|-Leu- and -Tyr-|-Trp bonds also occurs).. Functionally, cleaves peptides in various proteins in a process that requires ATP hydrolysis. Has a chymotrypsin-like activity. Plays a major role in the degradation of misfolded proteins. In Liriodendron tulipifera (Tuliptree), this protein is ATP-dependent Clp protease proteolytic subunit.